The following is a 106-amino-acid chain: Large ribosomal subunit protein bL21 (106 aa).

Belongs to the bacterial ribosomal protein bL21 family. In terms of assembly, part of the 50S ribosomal subunit. Contacts protein L20.

In terms of biological role, this protein binds to 23S rRNA in the presence of protein L20. In Syntrophobacter fumaroxidans (strain DSM 10017 / MPOB), this protein is Large ribosomal subunit protein bL21.